The sequence spans 165 residues: Large ribosomal subunit protein uL11A (165 aa).

At R67 the chain carries N5-methylarginine.

This sequence belongs to the universal ribosomal protein uL11 family. In terms of assembly, component of the large ribosomal subunit (LSU). Mature yeast ribosomes consist of a small (40S) and a large (60S) subunit. The 40S small subunit contains 1 molecule of ribosomal RNA (18S rRNA) and at least 33 different proteins. The large 60S subunit contains 3 rRNA molecules (25S, 5.8S and 5S rRNA) and at least 46 different proteins.

It localises to the cytoplasm. The protein resides in the nucleus. The protein localises to the nucleolus. Its function is as follows. This protein binds directly to 26S ribosomal RNA. Functionally, component of the ribosome, a large ribonucleoprotein complex responsible for the synthesis of proteins in the cell. The small ribosomal subunit (SSU) binds messenger RNAs (mRNAs) and translates the encoded message by selecting cognate aminoacyl-transfer RNA (tRNA) molecules. The large subunit (LSU) contains the ribosomal catalytic site termed the peptidyl transferase center (PTC), which catalyzes the formation of peptide bonds, thereby polymerizing the amino acids delivered by tRNAs into a polypeptide chain. The nascent polypeptides leave the ribosome through a tunnel in the LSU and interact with protein factors that function in enzymatic processing, targeting, and the membrane insertion of nascent chains at the exit of the ribosomal tunnel. The polypeptide is Large ribosomal subunit protein uL11A (rpl1201) (Schizosaccharomyces pombe (strain 972 / ATCC 24843) (Fission yeast)).